We begin with the raw amino-acid sequence, 433 residues long: Trigger factor (433 aa).

The 86-residue stretch at 161–246 (NDRVIIDFVG…LNKVENMILP (86 aa)) folds into the PPIase FKBP-type domain.

This sequence belongs to the FKBP-type PPIase family. Tig subfamily.

The protein localises to the cytoplasm. The enzyme catalyses [protein]-peptidylproline (omega=180) = [protein]-peptidylproline (omega=0). Functionally, involved in protein export. Acts as a chaperone by maintaining the newly synthesized protein in an open conformation. Functions as a peptidyl-prolyl cis-trans isomerase. The chain is Trigger factor from Haemophilus ducreyi (strain 35000HP / ATCC 700724).